The sequence spans 309 residues: Gamma-hemolysin component A (309 aa).

An N-terminal signal peptide occupies residues 1–29 (MIKNKILTATLAVGLIAPLANPFIEISKA).

The protein belongs to the aerolysin family. In terms of assembly, toxicity requires sequential binding and synergistic association of a class S and a class F component which form heterooligomeric complexes. HlgA (class S) associates with HlgB (class F) thus forming an AB toxin in strains producing both gamma-hemolysins and leukocidins. HlgA and LukF-PV can also form a complex.

The protein resides in the secreted. Its function is as follows. Toxin that seems to act by forming pores in the membrane of the cell. Has a hemolytic and a leucotoxic activity. This chain is Gamma-hemolysin component A (hlgA), found in Staphylococcus aureus (strain MRSA252).